The sequence spans 118 residues: MTSYTFTRELRLLTPAQFQAVFTNPVKASSAEITLLATPNTQEHPRVGLTVPKKQVKRAHDRNRVKRVIRESFRMHQHDLPSLDIVVLVRKGVMDLENPELHKLVDKLWRKLSRRFNG.

The protein belongs to the RnpA family. As to quaternary structure, consists of a catalytic RNA component (M1 or rnpB) and a protein subunit.

The catalysed reaction is Endonucleolytic cleavage of RNA, removing 5'-extranucleotides from tRNA precursor.. In terms of biological role, RNaseP catalyzes the removal of the 5'-leader sequence from pre-tRNA to produce the mature 5'-terminus. It can also cleave other RNA substrates such as 4.5S RNA. The protein component plays an auxiliary but essential role in vivo by binding to the 5'-leader sequence and broadening the substrate specificity of the ribozyme. The chain is Ribonuclease P protein component from Shewanella amazonensis (strain ATCC BAA-1098 / SB2B).